The sequence spans 896 residues: Translation initiation factor IF-2 (896 aa).

Disordered regions lie at residues 53 to 81 (HGGESAPTKMTLQRKSVSTLSVGSGSASK) and 117 to 301 (AEEA…ESMD). The segment covering 60–79 (TKMTLQRKSVSTLSVGSGSA) has biased composition (polar residues). The span at 117–227 (AEEAASKAKA…ESEKTGDHHV (111 aa)) shows a compositional bias: basic and acidic residues. A compositionally biased stretch (low complexity) spans 254–266 (ATPAPAAAPANTG). Over residues 273 to 282 (GKDNRRDSRN) the composition is skewed to basic and acidic residues. Residues 283–294 (ARGGRNARNNRS) are compositionally biased toward low complexity. The tr-type G domain occupies 394-563 (SRAPVVTIMG…LLEAEVLELK (170 aa)). The segment at 403-410 (GHVDHGKT) is G1. 403–410 (GHVDHGKT) provides a ligand contact to GTP. Residues 428–432 (GITQH) form a G2 region. Residues 449–452 (DTPG) are G3. GTP contacts are provided by residues 449–453 (DTPGH) and 503–506 (NKID). Residues 503–506 (NKID) are G4. Residues 539–541 (SAK) are G5.

Belongs to the TRAFAC class translation factor GTPase superfamily. Classic translation factor GTPase family. IF-2 subfamily.

It is found in the cytoplasm. In terms of biological role, one of the essential components for the initiation of protein synthesis. Protects formylmethionyl-tRNA from spontaneous hydrolysis and promotes its binding to the 30S ribosomal subunits. Also involved in the hydrolysis of GTP during the formation of the 70S ribosomal complex. The polypeptide is Translation initiation factor IF-2 (Shewanella sediminis (strain HAW-EB3)).